The sequence spans 276 residues: Large ribosomal subunit protein uL2 (276 aa).

Disordered regions lie at residues Met-1–His-58 and Arg-218–Lys-276. A compositionally biased stretch (polar residues) spans Ala-16–Ser-27. Basic residues predominate over residues Arg-255–Lys-276.

Belongs to the universal ribosomal protein uL2 family. As to quaternary structure, part of the 50S ribosomal subunit. Forms a bridge to the 30S subunit in the 70S ribosome.

One of the primary rRNA binding proteins. Required for association of the 30S and 50S subunits to form the 70S ribosome, for tRNA binding and peptide bond formation. It has been suggested to have peptidyltransferase activity; this is somewhat controversial. Makes several contacts with the 16S rRNA in the 70S ribosome. This is Large ribosomal subunit protein uL2 from Bifidobacterium animalis subsp. lactis (strain AD011).